Reading from the N-terminus, the 177-residue chain is Large ribosomal subunit protein uL6 (177 aa).

It belongs to the universal ribosomal protein uL6 family. In terms of assembly, part of the 50S ribosomal subunit.

Its function is as follows. This protein binds to the 23S rRNA, and is important in its secondary structure. It is located near the subunit interface in the base of the L7/L12 stalk, and near the tRNA binding site of the peptidyltransferase center. The sequence is that of Large ribosomal subunit protein uL6 from Sphingopyxis alaskensis (strain DSM 13593 / LMG 18877 / RB2256) (Sphingomonas alaskensis).